The primary structure comprises 182 residues: Small heat shock protein hspG1 (182 aa).

A sHSP domain is found at 43-182 (IKRIDIIPSM…SNSSFKININ (140 aa)).

This sequence belongs to the small heat shock protein (HSP20) family.

The polypeptide is Small heat shock protein hspG1 (hspG1) (Dictyostelium discoideum (Social amoeba)).